The following is a 499-amino-acid chain: Lysine--tRNA ligase (499 aa).

2 residues coordinate Mg(2+): glutamate 407 and glutamate 414.

The protein belongs to the class-II aminoacyl-tRNA synthetase family. Homodimer. It depends on Mg(2+) as a cofactor.

It localises to the cytoplasm. The enzyme catalyses tRNA(Lys) + L-lysine + ATP = L-lysyl-tRNA(Lys) + AMP + diphosphate. In Lactiplantibacillus plantarum (strain ATCC BAA-793 / NCIMB 8826 / WCFS1) (Lactobacillus plantarum), this protein is Lysine--tRNA ligase.